A 1865-amino-acid chain; its full sequence is Transcription initiation factor TFIID subunit 1 (1865 aa).

The segment at 1–27 is disordered; it reads MLLPATGASRSAAIMSDTDSDEDSSGG. The Protein kinase 1 domain maps to 1 to 409; the sequence is MLLPATGASR…VTQLHWEDDI (409 aa). Ser131 is modified (phosphoserine; by autocatalysis). Residues 144–199 are disordered; the sequence is EDIDCKLMPPPPPPPGPVKKEKDQDGLTGEKVDFSSSSDSESEMGPQEAAQAESKD. Pro residues predominate over residues 151 to 160; sequence MPPPPPPPGP. Positions 161–176 are enriched in basic and acidic residues; the sequence is VKKEKDQDGLTGEKVD. At Ser302 the chain carries Phosphoserine; by autocatalysis. Residues 509–530 are disordered; sequence PDEKEEATSNSPSKENKKESSL. The segment at 512-971 is histone acetyltransferase (HAT); it reads KEEATSNSPS…KIPNKPTQQK (460 aa). An N6-acetyllysine modification is found at Lys539. Residues Lys544 and Lys557 each participate in a glycyl lysine isopeptide (Lys-Gly) (interchain with G-Cter in SUMO2) cross-link. 2 disordered regions span residues 964 to 983 and 1228 to 1252; these read PNKP…KKTV and RLKR…MKER. Composition is skewed to basic and acidic residues over residues 969-978 and 1228-1244; these read QQKDDKEPQP and RLKR…PPEK. Positions 1190-1268 form a DNA-binding region, HMG box; sequence VRIRTTKDEE…CGACGAIGHM (79 aa). An interaction with ASF1A and ASF1B region spans residues 1337-1624; sequence VLKFPKQQLP…TAKEAALEEA (288 aa). A Nuclear localization signal motif is present at residues 1346-1353; sequence PPKKKRRV. Bromo domains are found at residues 1371–1479 and 1493–1602; these read RRRT…LKEK and LLDD…LTEY. In terms of domain architecture, Protein kinase 2 spans 1420–1865; the sequence is MDLQTLRENV…AGDSDMDSDE (446 aa). Positions 1625 to 1865 are disordered; sequence ELESLDPMTP…AGDSDMDSDE (241 aa). Pro residues predominate over residues 1633 to 1642; that stretch reads TPGPYTPQPP. The segment covering 1646–1682 has biased composition (polar residues); the sequence is DNSTSLSVSRDASVYQDESNMSVLDIPSATSEKQLTQ. Phosphoserine is present on residues Ser1664 and Ser1667. Composition is skewed to acidic residues over residues 1683–1697 and 1715–1730; these read EGED…EEEG and EGED…EEGD. Positions 1739–1751 are enriched in low complexity; it reads SESGSDSDVGSGS. Phosphoserine is present on residues Ser1773, Ser1776, and Ser1794. Positions 1804–1814 are enriched in polar residues; that stretch reads KSNTQDTSFSS. Positions 1820–1829 are enriched in acidic residues; sequence VSEEEEDEEE. Ser1821 bears the Phosphoserine mark. Over residues 1832 to 1841 the composition is skewed to polar residues; that stretch reads SGPSVLSQVH.

The protein belongs to the TAF1 family. Component of the TFIID basal transcription factor complex, composed of TATA-box-binding protein TBP, and a number of TBP-associated factors (TAFs), including TAF1, TAF2, TAF3, TAF4, TAF5, TAF6, TAF7, TAF8, TAF9, TAF10, TAF11, TAF12 and TAF13. Interacts with TAF7; the interaction is direct. TAF1, when part of the TFIID complex, interacts with C-terminus of TP53. Part of a TFIID-containing RNA polymerase II pre-initiation complex that is composed of TBP and at least GTF2A1, GTF2A2, GTF2E1, GTF2E2, GTF2F1, GTF2H2, GTF2H3, GTF2H4, GTF2H5, GTF2B, TCEA1, ERCC2, ERCC3, TAF1, TAF2, TAF3, TAF4, TAF5, TAF6, TAF7, TAF8, TAF9, TAF10, TAF11, TAF12 and TAF13. Component of some MLL1/MLL complex, at least composed of the core components KMT2A/MLL1, ASH2L, HCFC1/HCF1, WDR5 and RBBP5, as well as the facultative components BACC1, CHD8, E2F6, HSP70, INO80C, KANSL1, LAS1L, MAX, MCRS1, MGA, KAT8/MOF, PELP1, PHF20, PRP31, RING2, RUVB1/TIP49A, RUVB2/TIP49B, SENP3, TAF1, TAF4, TAF6, TAF7, TAF9 and TEX10. RB1 interacts with the N-terminal domain of TAF1. Interacts with ASF1A and ASF1B. Interacts (via bromo domains) with acetylated lysine residues on the N-terminus of histone H1.4, H2A, H2B, H3 and H4 (in vitro). Requires Mg(2+) as cofactor. In terms of processing, phosphorylated by casein kinase II in vitro.

The protein resides in the nucleus. The enzyme catalyses L-seryl-[protein] + ATP = O-phospho-L-seryl-[protein] + ADP + H(+). It catalyses the reaction L-threonyl-[protein] + ATP = O-phospho-L-threonyl-[protein] + ADP + H(+). It carries out the reaction L-lysyl-[protein] + acetyl-CoA = N(6)-acetyl-L-lysyl-[protein] + CoA + H(+). Autophosphorylates on Ser residues. Inhibited by retinoblastoma tumor suppressor protein, RB1. Binding to TAF1 or CIITA inhibits the histone acetyltransferase activity. Its function is as follows. The TFIID basal transcription factor complex plays a major role in the initiation of RNA polymerase II (Pol II)-dependent transcription. TFIID recognizes and binds promoters with or without a TATA box via its subunit TBP, a TATA-box-binding protein, and promotes assembly of the pre-initiation complex (PIC). The TFIID complex consists of TBP and TBP-associated factors (TAFs), including TAF1, TAF2, TAF3, TAF4, TAF5, TAF6, TAF7, TAF8, TAF9, TAF10, TAF11, TAF12 and TAF13. TAF1 is the largest component and core scaffold of the TFIID complex, involved in nucleating complex assembly. TAF1 forms a promoter DNA binding subcomplex of TFIID, together with TAF7 and TAF2. Contains novel N- and C-terminal Ser/Thr kinase domains which can autophosphorylate or transphosphorylate other transcription factors. Phosphorylates TP53 on 'Thr-55' which leads to MDM2-mediated degradation of TP53. Phosphorylates GTF2A1 and GTF2F1 on Ser residues. Possesses DNA-binding activity. Essential for progression of the G1 phase of the cell cycle. This Mesocricetus auratus (Golden hamster) protein is Transcription initiation factor TFIID subunit 1.